A 155-amino-acid polypeptide reads, in one-letter code: Cardio acceleratory peptide 2b (155 aa).

The N-terminal stretch at 1-26 (MKAIFSLYNIVSAILLLVLLAEFSTA) is a signal peptide. A propeptide spanning residues 27–33 (ELNHDKN) is cleaved from the precursor. A Valine amide modification is found at valine 47. The propeptide occupies 50–85 (SDPSLANSLRDASDAAVFDGLYGDASQEDYNEADYQ). Valine 96 carries the valine amide modification. A propeptide spanning residues 99 to 117 (SDAELRKFAHLLALQQVLD) is cleaved from the precursor. At leucine 134 the chain carries Leucine amide. A propeptide spanning residues 138-155 (SVDAKAFSDASKGQQEFN) is cleaved from the precursor.

The protein belongs to the pyrokinin family.

It localises to the secreted. Functionally, CAP-1 and CAP-2, but not CAP-3 are ligands for the Capa receptor. CAP-1 and CAP-2 are probably components of the signal transduction pathway that leads to Malpighian tubule fluid secretion via the second messenger nitric oxide. In Drosophila pseudoobscura pseudoobscura (Fruit fly), this protein is Cardio acceleratory peptide 2b.